The following is a 208-amino-acid chain: Imidazole glycerol phosphate synthase subunit HisH (208 aa).

Positions 1–206 constitute a Glutamine amidotransferase type-1 domain; the sequence is MIVIIDYDTG…KEVIRSCKSS (206 aa). C79 serves as the catalytic Nucleophile. Catalysis depends on residues H181 and E183.

Heterodimer of HisH and HisF.

It localises to the cytoplasm. The enzyme catalyses 5-[(5-phospho-1-deoxy-D-ribulos-1-ylimino)methylamino]-1-(5-phospho-beta-D-ribosyl)imidazole-4-carboxamide + L-glutamine = D-erythro-1-(imidazol-4-yl)glycerol 3-phosphate + 5-amino-1-(5-phospho-beta-D-ribosyl)imidazole-4-carboxamide + L-glutamate + H(+). It catalyses the reaction L-glutamine + H2O = L-glutamate + NH4(+). It functions in the pathway amino-acid biosynthesis; L-histidine biosynthesis; L-histidine from 5-phospho-alpha-D-ribose 1-diphosphate: step 5/9. IGPS catalyzes the conversion of PRFAR and glutamine to IGP, AICAR and glutamate. The HisH subunit catalyzes the hydrolysis of glutamine to glutamate and ammonia as part of the synthesis of IGP and AICAR. The resulting ammonia molecule is channeled to the active site of HisF. This Listeria welshimeri serovar 6b (strain ATCC 35897 / DSM 20650 / CCUG 15529 / CIP 8149 / NCTC 11857 / SLCC 5334 / V8) protein is Imidazole glycerol phosphate synthase subunit HisH.